The sequence spans 382 residues: Dihydroflavonol 4-reductase (382 aa).

Lys44 and Tyr163 together coordinate NADP(+).

Belongs to the NAD(P)-dependent epimerase/dehydratase family. Dihydroflavonol-4-reductase subfamily.

It catalyses the reaction a (2R,3S,4S)-leucoanthocyanidin + NADP(+) = a (2R,3R)-dihydroflavonol + NADPH + H(+). It carries out the reaction (2S)-flavan-4-ol + NADP(+) = (2S)-flavanone + NADPH + H(+). The protein operates within pigment biosynthesis; anthocyanin biosynthesis. Bifunctional enzyme involved in flavonoid metabolism. The protein is Dihydroflavonol 4-reductase (DFRA) of Arabidopsis thaliana (Mouse-ear cress).